Here is a 749-residue protein sequence, read N- to C-terminus: ATP-dependent zinc metalloprotease FtsH 3 (749 aa).

The segment covering 1–17 (MTGDPPERRSNGDRLPA) has biased composition (basic and acidic residues). The interval 1-67 (MTGDPPERRS…GRNGGGMRPF (67 aa)) is disordered. The Cytoplasmic segment spans residues 1 to 75 (MTGDPPERRS…PFRFPGGRWG (75 aa)). The chain crosses the membrane as a helical span at residues 76–96 (ILVFILVLLGLNWWISSNALA). At 97–186 (PSERVRVPYS…NASPADNGPS (90 aa)) the chain is on the extracellular side. The chain crosses the membrane as a helical span at residues 187-207 (LLVSILLGFGPVILIIALFVF). The Cytoplasmic portion of the chain corresponds to 208–749 (LSRRMAGAAG…LGGSVRAGDA (542 aa)). 281-288 (GQPGTGKT) is a binding site for ATP. His-504 provides a ligand contact to Zn(2+). Residue Glu-505 is part of the active site. 2 residues coordinate Zn(2+): His-508 and Asp-580. Residues 679 to 689 (GLEHMRPERVE) show a composition bias toward basic and acidic residues. The segment at 679–749 (GLEHMRPERV…LGGSVRAGDA (71 aa)) is disordered.

The protein in the central section; belongs to the AAA ATPase family. This sequence in the C-terminal section; belongs to the peptidase M41 family. Homohexamer. Zn(2+) serves as cofactor.

It is found in the cell membrane. In terms of biological role, acts as a processive, ATP-dependent zinc metallopeptidase for both cytoplasmic and membrane proteins. Plays a role in the quality control of integral membrane proteins. The chain is ATP-dependent zinc metalloprotease FtsH 3 from Conexibacter woesei (strain DSM 14684 / CCUG 47730 / CIP 108061 / JCM 11494 / NBRC 100937 / ID131577).